The primary structure comprises 113 residues: Nucleoid-associated protein P9303_00241 (113 aa).

Positions 90–113 (TTTMKEQMEELTGGLNLNLPGMSD) are disordered.

This sequence belongs to the YbaB/EbfC family. In terms of assembly, homodimer.

The protein localises to the cytoplasm. The protein resides in the nucleoid. Binds to DNA and alters its conformation. May be involved in regulation of gene expression, nucleoid organization and DNA protection. The protein is Nucleoid-associated protein P9303_00241 of Prochlorococcus marinus (strain MIT 9303).